The sequence spans 111 residues: COX assembly mitochondrial protein (111 aa).

Positions 39 to 82 constitute a CHCH domain; that stretch reads YKKCANFVQAMADCAKANGMKVFPTCDKQRDEMKSCLLFYQTDE. 2 short sequence motifs (cx9C motif) span residues 42–52 and 64–74; these read CANFVQAMADC and CDKQRDEMKSC. 2 disulfides stabilise this stretch: cysteine 42/cysteine 74 and cysteine 52/cysteine 64.

It belongs to the CMC family.

The protein resides in the mitochondrion inner membrane. Required for mitochondrial cytochrome c oxidase (COX) assembly and respiration. Binds copper. May be involved in copper trafficking and distribution to mitochondrial COX and SOD1. The chain is COX assembly mitochondrial protein (CMC1) from Saccharomyces cerevisiae (strain YJM789) (Baker's yeast).